The following is a 150-amino-acid chain: Arginine repressor (150 aa).

It belongs to the ArgR family.

The protein resides in the cytoplasm. It functions in the pathway amino-acid biosynthesis; L-arginine biosynthesis [regulation]. In terms of biological role, regulates arginine biosynthesis genes. In Psychromonas ingrahamii (strain DSM 17664 / CCUG 51855 / 37), this protein is Arginine repressor.